The sequence spans 55 residues: ATP synthase F(0) complex subunit 8 (55 aa).

Residues 10–32 (FFIMLASWLTFSLIIQPKLLTFV) traverse the membrane as a helical segment.

This sequence belongs to the ATPase protein 8 family. Component of the ATP synthase complex composed at least of ATP5F1A/subunit alpha, ATP5F1B/subunit beta, ATP5MC1/subunit c (homooctomer), MT-ATP6/subunit a, MT-ATP8/subunit 8, ATP5ME/subunit e, ATP5MF/subunit f, ATP5MG/subunit g, ATP5MK/subunit k, ATP5MJ/subunit j, ATP5F1C/subunit gamma, ATP5F1D/subunit delta, ATP5F1E/subunit epsilon, ATP5PF/subunit F6, ATP5PB/subunit b, ATP5PD/subunit d, ATP5PO/subunit OSCP. ATP synthase complex consists of a soluble F(1) head domain (subunits alpha(3) and beta(3)) - the catalytic core - and a membrane F(0) domain - the membrane proton channel (subunits c, a, 8, e, f, g, k and j). These two domains are linked by a central stalk (subunits gamma, delta, and epsilon) rotating inside the F1 region and a stationary peripheral stalk (subunits F6, b, d, and OSCP).

The protein localises to the mitochondrion membrane. In terms of biological role, subunit 8, of the mitochondrial membrane ATP synthase complex (F(1)F(0) ATP synthase or Complex V) that produces ATP from ADP in the presence of a proton gradient across the membrane which is generated by electron transport complexes of the respiratory chain. ATP synthase complex consist of a soluble F(1) head domain - the catalytic core - and a membrane F(1) domain - the membrane proton channel. These two domains are linked by a central stalk rotating inside the F(1) region and a stationary peripheral stalk. During catalysis, ATP synthesis in the catalytic domain of F(1) is coupled via a rotary mechanism of the central stalk subunits to proton translocation. In vivo, can only synthesize ATP although its ATP hydrolase activity can be activated artificially in vitro. Part of the complex F(0) domain. The chain is ATP synthase F(0) complex subunit 8 from Loxigilla noctis (Lesser Antillean bullfinch).